The primary structure comprises 559 residues: Protein QNR-71 (559 aa).

The first 22 residues, 1–22 (MSQAHRHLALLLPAEAVLCAAA), serve as a signal peptide directing secretion. Over 23 to 487 (MRFQDVLSNG…NGGSSSGTTK (465 aa)) the chain is Extracellular. 10 N-linked (GlcNAc...) asparagine glycosylation sites follow: asparagine 92, asparagine 133, asparagine 145, asparagine 149, asparagine 192, asparagine 199, asparagine 248, asparagine 274, asparagine 307, and asparagine 311. The 88-residue stretch at 239–326 (VSMSQKHDRN…IIPVPCKPVT (88 aa)) folds into the PKD domain. The segment at 329-356 (PSLPTPAVTTDASSNSDPSAPNEMAEDN) is disordered. The segment covering 335–347 (AVTTDASSNSDPS) has biased composition (polar residues). N-linked (GlcNAc...) asparagine glycosylation occurs at asparagine 459. A helical membrane pass occupies residues 488–508 (GVFIFLGLLAVFGAIGAFVLY). Topologically, residues 509–559 (KRYKQYKPIERSAGQAENQEGLSAYVSNFKAFFFPKSTERNPLLKSKPGIV) are cytoplasmic.

The protein belongs to the PMEL/NMB family. Melanocyte-specific, restricted to the pigmented layer of the retina and the epidermis.

It is found in the membrane. Its function is as follows. Could be involved in melanogenesis. The protein is Protein QNR-71 (QNR-71) of Coturnix japonica (Japanese quail).